A 278-amino-acid chain; its full sequence is Shikimate dehydrogenase (NADP(+)) (278 aa).

Shikimate-binding positions include 19-21 and Thr66; that span reads SRS. Lys70 (proton acceptor) is an active-site residue. Shikimate contacts are provided by Asn91 and Asp106. Residues 129–133 and Phe221 contribute to the NADP(+) site; that span reads GAGGA. Tyr223 contributes to the shikimate binding site. Position 242 (Gly242) interacts with NADP(+).

Belongs to the shikimate dehydrogenase family. As to quaternary structure, homodimer.

The enzyme catalyses shikimate + NADP(+) = 3-dehydroshikimate + NADPH + H(+). It functions in the pathway metabolic intermediate biosynthesis; chorismate biosynthesis; chorismate from D-erythrose 4-phosphate and phosphoenolpyruvate: step 4/7. Its function is as follows. Involved in the biosynthesis of the chorismate, which leads to the biosynthesis of aromatic amino acids. Catalyzes the reversible NADPH linked reduction of 3-dehydroshikimate (DHSA) to yield shikimate (SA). The protein is Shikimate dehydrogenase (NADP(+)) of Anaeromyxobacter sp. (strain K).